The chain runs to 337 residues: MRLYELSFDEVERFFYKLAELRDTVKDSGLMSYVPELVSLTGQVQGTTRVKHAFPIFQKGGVVMDVTSVEQAGIAEEAGAVSVMVLDKLPYDVRKAGGVARMADPKIIEEVMNSITIPVMAKVRIGHYYEAKVLEALGVDMIDESEVLTPADEEHHINKWEFKIPFVNGARNLGEGLRRISEGASMIRTKGEPGTGNVSEAVKHIKIVNQELRALLSMAEEDRVKKSRELQVPYELVELTVKYARLPVVNFAAGGIATPADAALMMWLGTDGIFVGSGIFKSEDPLERAKAIVLATAGWEDPEIVLEAQKMISEHKAMMGIDIKTLKPEELMQVRGA.

Aspartate 65 provides a ligand contact to D-ribose 5-phosphate. The Schiff-base intermediate with D-ribose 5-phosphate role is filled by lysine 122. Glycine 194 serves as a coordination point for D-ribose 5-phosphate. Lysine 206 is a binding site for D-glyceraldehyde 3-phosphate. D-ribose 5-phosphate-binding positions include glycine 255 and 276–277 (GS).

The protein belongs to the PdxS/SNZ family. In the presence of PdxT, forms a dodecamer of heterodimers.

It catalyses the reaction aldehydo-D-ribose 5-phosphate + D-glyceraldehyde 3-phosphate + L-glutamine = pyridoxal 5'-phosphate + L-glutamate + phosphate + 3 H2O + H(+). It functions in the pathway cofactor biosynthesis; pyridoxal 5'-phosphate biosynthesis. Its function is as follows. Catalyzes the formation of pyridoxal 5'-phosphate from ribose 5-phosphate (RBP), glyceraldehyde 3-phosphate (G3P) and ammonia. The ammonia is provided by the PdxT subunit. Can also use ribulose 5-phosphate and dihydroxyacetone phosphate as substrates, resulting from enzyme-catalyzed isomerization of RBP and G3P, respectively. This Metallosphaera sedula (strain ATCC 51363 / DSM 5348 / JCM 9185 / NBRC 15509 / TH2) protein is Pyridoxal 5'-phosphate synthase subunit PdxS.